A 289-amino-acid polypeptide reads, in one-letter code: Oxaloacetate decarboxylase (289 aa).

A substrate-binding site is contributed by serine 47. Residue aspartate 85 coordinates Mg(2+). Residues arginine 156 and histidine 232 each contribute to the substrate site.

Belongs to the isocitrate lyase/PEP mutase superfamily. Oxaloacetate decarboxylase family. In terms of assembly, homotetramer; dimer of dimers. Mg(2+) is required as a cofactor.

The enzyme catalyses oxaloacetate + H(+) = pyruvate + CO2. Its function is as follows. Catalyzes the decarboxylation of oxaloacetate into pyruvate. Seems to play a role in maintaining cellular concentrations of bicarbonate and pyruvate. The polypeptide is Oxaloacetate decarboxylase (Rhodopseudomonas palustris (strain HaA2)).